Reading from the N-terminus, the 209-residue chain is Transmembrane emp24 domain-containing protein B (209 aa).

Positions methionine 1 to alanine 24 are cleaved as a signal peptide. Over leucine 25–arginine 174 the chain is Lumenal. The GOLD domain maps to glutamine 34–serine 119. A helical membrane pass occupies residues valine 175–tryptophan 195. Residues tyrosine 196–valine 209 are Cytoplasmic-facing.

The protein belongs to the EMP24/GP25L family.

Its subcellular location is the cytoplasmic vesicle membrane. Its function is as follows. Could have a role in the budding of coatomer-coated and other species of coated vesicles. The polypeptide is Transmembrane emp24 domain-containing protein B (empB) (Dictyostelium discoideum (Social amoeba)).